We begin with the raw amino-acid sequence, 141 residues long: ATP synthase epsilon chain (141 aa).

The protein belongs to the ATPase epsilon chain family. In terms of assembly, F-type ATPases have 2 components, CF(1) - the catalytic core - and CF(0) - the membrane proton channel. CF(1) has five subunits: alpha(3), beta(3), gamma(1), delta(1), epsilon(1). CF(0) has three main subunits: a, b and c.

It is found in the cell inner membrane. Produces ATP from ADP in the presence of a proton gradient across the membrane. This Chromohalobacter salexigens (strain ATCC BAA-138 / DSM 3043 / CIP 106854 / NCIMB 13768 / 1H11) protein is ATP synthase epsilon chain.